Here is an 878-residue protein sequence, read N- to C-terminus: Leucine--tRNA ligase (878 aa).

The 'HIGH' region signature appears at 56 to 66 (PYPSGKLHMGH). The 'KMSKS' region signature appears at 630–634 (KMSKS). ATP is bound at residue K633.

It belongs to the class-I aminoacyl-tRNA synthetase family.

Its subcellular location is the cytoplasm. It catalyses the reaction tRNA(Leu) + L-leucine + ATP = L-leucyl-tRNA(Leu) + AMP + diphosphate. The sequence is that of Leucine--tRNA ligase from Prochlorococcus marinus (strain MIT 9303).